The sequence spans 232 residues: MSNVDRAEIAKFEALAHRWWDRESEFKPLHEINPLRVNWIDERASLAGKKVLDVGCGGGILSEAMALRGATVTGIDMGEAPLAVAQLHQLESGVQVEYRQITAEALAEEMPEQFDVVTCLEMLEHVPDPSSVIRACYRMVKPGGQVFFSTINRNPKAYLLAIVGAEYILKMLPRGTHDFKKFIRPSELGAWSRDAGLQVKDIIGLTYNPLTKHYKLNSDVDVNYMIQTLREE.

Residues Arg36, Gly55, Asp76, and Leu120 each coordinate S-adenosyl-L-methionine.

Belongs to the methyltransferase superfamily. UbiG/COQ3 family.

It carries out the reaction a 3-demethylubiquinol + S-adenosyl-L-methionine = a ubiquinol + S-adenosyl-L-homocysteine + H(+). It catalyses the reaction a 3-(all-trans-polyprenyl)benzene-1,2-diol + S-adenosyl-L-methionine = a 2-methoxy-6-(all-trans-polyprenyl)phenol + S-adenosyl-L-homocysteine + H(+). The protein operates within cofactor biosynthesis; ubiquinone biosynthesis. O-methyltransferase that catalyzes the 2 O-methylation steps in the ubiquinone biosynthetic pathway. The polypeptide is Ubiquinone biosynthesis O-methyltransferase (Pseudomonas putida (strain GB-1)).